Here is a 341-residue protein sequence, read N- to C-terminus: Uroporphyrinogen decarboxylase (341 aa).

Substrate-binding positions include 23-27, D73, Y147, S202, and H318; that span reads RQAGR.

Belongs to the uroporphyrinogen decarboxylase family. As to quaternary structure, homodimer.

It is found in the cytoplasm. The enzyme catalyses uroporphyrinogen III + 4 H(+) = coproporphyrinogen III + 4 CO2. Its pathway is porphyrin-containing compound metabolism; protoporphyrin-IX biosynthesis; coproporphyrinogen-III from 5-aminolevulinate: step 4/4. Functionally, catalyzes the decarboxylation of four acetate groups of uroporphyrinogen-III to yield coproporphyrinogen-III. The sequence is that of Uroporphyrinogen decarboxylase from Erythrobacter litoralis (strain HTCC2594).